Reading from the N-terminus, the 147-residue chain is Large ribosomal subunit protein bL9 (147 aa).

Belongs to the bacterial ribosomal protein bL9 family.

In terms of biological role, binds to the 23S rRNA. The protein is Large ribosomal subunit protein bL9 of Clostridium acetobutylicum (strain ATCC 824 / DSM 792 / JCM 1419 / IAM 19013 / LMG 5710 / NBRC 13948 / NRRL B-527 / VKM B-1787 / 2291 / W).